The chain runs to 614 residues: V-type proton ATPase catalytic subunit A (614 aa).

247–254 lines the ATP pocket; the sequence is GAFGCGKT.

Belongs to the ATPase alpha/beta chains family. V-ATPase is a heteromultimeric enzyme made up of two complexes: the ATP-hydrolytic V1 complex and the proton translocation V0 complex. The V1 complex consists of three catalytic AB heterodimers that form a heterohexamer, three peripheral stalks each consisting of EG heterodimers, one central rotor including subunits D and F, and the regulatory subunits C and H. The proton translocation complex V0 consists of the proton transport subunit a, a ring of proteolipid subunits c9c'', rotary subunit d, subunits e and f, and the accessory subunits VhaAC45 and ATP6AP2.

The enzyme catalyses ATP + H2O + 4 H(+)(in) = ADP + phosphate + 5 H(+)(out). With respect to regulation, ATP hydrolysis occurs at the interface between the nucleotide-binding domains of subunits A and B. ATP hydrolysis triggers a conformational change in the subunits D and F, which induces a shift of subunit d. The c-ring is subsequently rotated and results in a continuous proton translocation across the membrane. Its function is as follows. Catalytic subunit of the V1 complex of vacuolar(H+)-ATPase (V-ATPase), a multisubunit enzyme composed of a peripheral complex (V1) that hydrolyzes ATP and a membrane integral complex (V0) that translocates protons. V-ATPase is responsible for acidifying and maintaining the pH of intracellular compartments and in some cell types, is targeted to the plasma membrane, where it is responsible for acidifying the extracellular environment. This is V-type proton ATPase catalytic subunit A (VhaA) from Aedes aegypti (Yellowfever mosquito).